Here is a 625-residue protein sequence, read N- to C-terminus: Protein SUPPRESSOR OF GENE SILENCING 3 (625 aa).

3 disordered regions span residues 1 to 20 (MSSR…GYRP), 30 to 148 (AGTR…SAQH), and 161 to 195 (VDNA…QKSH). Residues 54–70 (KPGNTSGKTWVSQNSNP) are compositionally biased toward polar residues. Residues 80 to 94 (GRGSNVSGRGNNVSG) show a composition bias toward low complexity. Residues 161 to 188 (VDNASEEENDSDALDDSDDDLASDDYDS) are compositionally biased toward acidic residues. Coiled-coil stretches lie at residues 452–533 (KNKL…QQQE) and 564–615 (IEFQ…EQLM).

Belongs to the SGS3 family. Interacts with begomoviruses protein V2. Interacts with SGIP1 in cytoplasmic granules.

It localises to the cytoplasm. Its subcellular location is the perinuclear region. It is found in the cytoplasmic granule. Required for post-transcriptional gene silencing and natural virus resistance. May bind nucleic acids and is essential for the biogenesis of trans-acting siRNAs but is not required for silencing induced by IR-PTGS. Involved in the juvenile-to-adult transition regulation. In case of begomoviruses infection, it is targeted by the viral protein V2 leading to suppression of post-transcriptional gene silencing. Involved in the mechanisms necessary for quick response to heat and subsequent heritable transgenerational memory of heat acclimation (global warming) such as early flowering and attenuated immunity; this process includes epigenetic regulation as well as post-transcriptional gene silencing (PTGS). In response to heat, HSFA2 is activated and promotes the expression of REF6 which in turn derepresses HSFA2, thus establishing an inheritable feedback loop able to trigger SGIP1 and subsequent SGIP1-mediated SGS3 degradation; this prevents the biosynthesis of trans-acting siRNA (tasiRNA) and leads to the release of HTT5, which drives early flowering but attenuates immunity. This is Protein SUPPRESSOR OF GENE SILENCING 3 from Arabidopsis thaliana (Mouse-ear cress).